The chain runs to 1044 residues: Eukaryotic translation initiation factor 3 subunit A (1044 aa).

The stretch at 92-121 (LKKFIELAEKKVTEAQAKADEIQSSLESAA) forms a coiled coil. A PCI domain is found at 339-523 (MTKAASFVLL…GVLTFDTDIF (185 aa)). A coiled-coil region spans residues 611-907 (IDKKKEAATD…EARRAARKAG (297 aa)). The span at 797–901 (SEKRHEEFEK…QREEEAEARR (105 aa)) shows a compositional bias: basic and acidic residues. The segment at 797–1044 (SEKRHEEFEK…WVPRWKQQQS (248 aa)) is disordered. 2 stretches are compositionally biased toward low complexity: residues 943–956 (KEAA…AAPA) and 1006–1017 (SSSSQPPSRTQT).

This sequence belongs to the eIF-3 subunit A family. As to quaternary structure, component of the eukaryotic translation initiation factor 3 (eIF-3) complex.

The protein resides in the cytoplasm. Its function is as follows. RNA-binding component of the eukaryotic translation initiation factor 3 (eIF-3) complex, which is involved in protein synthesis of a specialized repertoire of mRNAs and, together with other initiation factors, stimulates binding of mRNA and methionyl-tRNAi to the 40S ribosome. The eIF-3 complex specifically targets and initiates translation of a subset of mRNAs involved in cell proliferation. The protein is Eukaryotic translation initiation factor 3 subunit A (tif32) of Aspergillus clavatus (strain ATCC 1007 / CBS 513.65 / DSM 816 / NCTC 3887 / NRRL 1 / QM 1276 / 107).